Reading from the N-terminus, the 101-residue chain is UPF0235 protein Mevan_0378 (101 aa).

The protein belongs to the UPF0235 family.

This chain is UPF0235 protein Mevan_0378, found in Methanococcus vannielii (strain ATCC 35089 / DSM 1224 / JCM 13029 / OCM 148 / SB).